The chain runs to 141 residues: Ly6/PLAUR domain-containing protein 1 (141 aa).

A signal peptide spans 1 to 20; that stretch reads MWVLGIAATFCGLFLLPGFA. 6 disulfides stabilise this stretch: Cys25–Cys54, Cys28–Cys37, Cys46–Cys71, Cys77–Cys100, Cys88–Cys97, and Cys101–Cys106. The UPAR/Ly6 domain maps to 25–107; sequence CYQCEEFQLN…ISCCNTPLCN (83 aa). A glycan (N-linked (GlcNAc...) asparagine) is linked at Asn45. A lipid anchor (GPI-anchor amidated serine) is attached at Ser117. A propeptide spans 118–141 (removed in mature form); it reads ASALRPGLRTTILFLKLALFSAHC.

In terms of assembly, interacts with CHRNA4 and nAChRs containing alpha-4:beta-2 (CHRNA4:CHRNB2) and alpha-7 (CHRNA7) subunits.

It localises to the cell membrane. Its function is as follows. Believed to act as a modulator of nicotinic acetylcholine receptors (nAChRs) activity. In vitro increases receptor desensitization and decreases affinity for ACh of alpha-4:beta-2-containing nAChRs. May play a role in the intracellular trafficking of alpha-4:beta-2 and alpha-7-containing nAChRs and may inhibit their expression at the cell surface. May be involved in the control of anxiety. In Homo sapiens (Human), this protein is Ly6/PLAUR domain-containing protein 1 (LYPD1).